The following is a 291-amino-acid chain: Probable 2-(5''-triphosphoribosyl)-3'-dephosphocoenzyme-A synthase (291 aa).

It belongs to the CitG/MdcB family.

It catalyses the reaction 3'-dephospho-CoA + ATP = 2'-(5''-triphospho-alpha-D-ribosyl)-3'-dephospho-CoA + adenine. Involved in the formation of 2-(5''-phosphoribosyl)-3'-dephosphocoenzyme-A, the prosthetic group of the acyl-carrier protein of the malonate decarboxylase. This Pseudomonas syringae pv. tomato (strain ATCC BAA-871 / DC3000) protein is Probable 2-(5''-triphosphoribosyl)-3'-dephosphocoenzyme-A synthase.